Here is a 176-residue protein sequence, read N- to C-terminus: Small ribosomal subunit protein uS5 (176 aa).

An S5 DRBM domain is found at 11-74 (LSEVLVDVNR…QAAKKRMMKV (64 aa)).

The protein belongs to the universal ribosomal protein uS5 family. Part of the 30S ribosomal subunit. Contacts proteins S4 and S8.

With S4 and S12 plays an important role in translational accuracy. In terms of biological role, located at the back of the 30S subunit body where it stabilizes the conformation of the head with respect to the body. This Rickettsia massiliae (strain Mtu5) protein is Small ribosomal subunit protein uS5.